We begin with the raw amino-acid sequence, 875 residues long: Lysine-specific demethylase 7A (875 aa).

A PHD-type zinc finger spans residues 5-56 (PLYCVCRQPYDVNRFMIECDICKDWFHGSCVQVVEHHAADIDVYHCPNCEPI). The JmjC domain maps to 197–353 (FSDTRMSNLV…MQLRCYEMER (157 aa)). Threonine 246 provides a ligand contact to substrate. Residues histidine 249 and aspartate 251 each contribute to the Fe cation site. Residue lysine 266 participates in substrate binding. A Fe cation-binding site is contributed by histidine 321. Disordered stretches follow at residues 442-506 (EDDS…SRKL), 629-710 (SQGE…NTDC), and 742-820 (QGNG…ATAK). Residues 448 to 462 (AVKTQGSAECSLSRS) are compositionally biased toward polar residues. The segment covering 478–505 (QDHHHHRRRHHHHHHHHHHHHHHHHSRK) has biased composition (basic residues). Residues 650 to 663 (SDSKAGDSAEKCSL) are compositionally biased toward basic and acidic residues. The span at 688-697 (SHRHSHHKQA) shows a compositional bias: basic residues. Residues 742–762 (QGNGSSTSSSSDMWDSSEPCS) are compositionally biased toward low complexity.

The protein belongs to the JHDM1 histone demethylase family. JHDM1D subfamily. It depends on Fe(2+) as a cofactor. As to expression, predominantly expressed in brain.

It is found in the nucleus. Histone demethylase required for brain development. Specifically demethylates dimethylated 'Lys-9' and 'Lys-27' (H3K9me2 and H3K27me2, respectively) of histone H3 and monomethylated histone H4 'Lys-20' residue (H4K20Me1), thereby playing a central role in histone code. The chain is Lysine-specific demethylase 7A (kdm7a) from Danio rerio (Zebrafish).